The following is a 77-amino-acid chain: DNA-directed RNA polymerase subunit omega (77 aa).

This sequence belongs to the RNA polymerase subunit omega family. In terms of assembly, the RNAP catalytic core consists of 2 alpha, 1 beta, 1 beta' and 1 omega subunit. When a sigma factor is associated with the core the holoenzyme is formed, which can initiate transcription.

The catalysed reaction is RNA(n) + a ribonucleoside 5'-triphosphate = RNA(n+1) + diphosphate. In terms of biological role, promotes RNA polymerase assembly. Latches the N- and C-terminal regions of the beta' subunit thereby facilitating its interaction with the beta and alpha subunits. This Dichelobacter nodosus (strain VCS1703A) protein is DNA-directed RNA polymerase subunit omega.